The chain runs to 215 residues: Ras-related protein Rab-5A (215 aa).

GTP is bound by residues Ser-29, Ala-30, Gly-32, Lys-33, Ser-34, Ser-35, His-46, Glu-47, Thr-52, and Gly-78. Ser-34 contacts Mg(2+). 2 short sequence motifs (switch) span residues 44-56 (QFHEFQESTIGAA) and 77-93 (AGQERYHSLAPMYYRGA). A Mg(2+)-binding site is contributed by Thr-52. Phosphoserine is present on Ser-84. 5 residues coordinate GTP: Asn-133, Lys-134, Asp-136, Ala-164, and Lys-165. The disordered stretch occupies residues 181 to 215 (LPKNEPQNPGANSARGRGVDLTEPAQPARSQCCSN). Residues Cys-212 and Cys-213 are each lipidated (S-geranylgeranyl cysteine).

The protein belongs to the small GTPase superfamily. Rab family. In terms of assembly, interacts with GDI1; this promotes dissociation from membranes; phosphorylation at Ser-84 disrupts this interaction. Interacts with GDI2; phosphorylation at Ser-84 disrupts the interaction. Interacts with EEA1. Interacts with RIN1 and GAPVD1, which regulate its pathway, probably by acting as a GEF. Interacts with ALS2CL, SUN2, ZFYVE20 and RUFY1. Interacts with RABEP1; one RABEP1 homodimer binds two RAB5A chains, but at opposite sides of the dimer. Interacts with SGSM1, SGSM3 and PIK3CB. Interacts with RINL. May be a component of a complex composed of RAB5A, DYN2 and PIK3C3. Does not interact with the BLOC-3 complex (heterodimer of HPS1 and HPS4). Interacts with CLN5. Interacts with APPL2. Interacts with F8A1/F8A2/F8A3. Found in a complex with F8A1/F8A2/F8A3, HTT and RAB5A; mediates the recruitment of HTT by RAB5A onto early endosomes. Interacts with ATP9A. Interacts with PPP1R21; mediates the recruitment of FERRY complex by RAB5A onto early endosomes. Mg(2+) is required as a cofactor. Post-translationally, phosphorylation of Ser-84 in the switch II region by LRRK2 prevents the association of RAB regulatory proteins, including RAB GDP dissociation inhibitors GDI1 and GDI2.

The protein resides in the cell membrane. It is found in the early endosome membrane. It localises to the melanosome. Its subcellular location is the cytoplasmic vesicle. The protein localises to the cell projection. The protein resides in the ruffle. It is found in the membrane. It localises to the cytoplasm. Its subcellular location is the cytosol. The protein localises to the phagosome membrane. The protein resides in the endosome membrane. It catalyses the reaction GTP + H2O = GDP + phosphate + H(+). Its activity is regulated as follows. Regulated by guanine nucleotide exchange factors (GEFs) including RINL, which promote the exchange of bound GDP for free GTP. Regulated by GTPase activating proteins (GAPs) which increase the GTP hydrolysis activity. Inhibited by GDP dissociation inhibitors (GDIs). Its function is as follows. The small GTPases Rab are key regulators of intracellular membrane trafficking, from the formation of transport vesicles to their fusion with membranes. Rabs cycle between an inactive GDP-bound form and an active GTP-bound form that is able to recruit to membranes different sets of downstream effectors directly responsible for vesicle formation, movement, tethering and fusion. RAB5A is required for the fusion of plasma membranes and early endosomes. Contributes to the regulation of filopodia extension. Required for the exosomal release of SDCBP, CD63, PDCD6IP and syndecan. Regulates maturation of apoptotic cell-containing phagosomes, probably downstream of DYN2 and PIK3C3. The chain is Ras-related protein Rab-5A from Rattus norvegicus (Rat).